A 342-amino-acid polypeptide reads, in one-letter code: tRNA dimethylallyltransferase (342 aa).

An ATP-binding site is contributed by 39–46; that stretch reads GPTGSGKT. 41–46 provides a ligand contact to substrate; sequence TGSGKT. An interaction with substrate tRNA region spans residues 64–67; sequence DSMQ.

This sequence belongs to the IPP transferase family. As to quaternary structure, monomer. Requires Mg(2+) as cofactor.

It carries out the reaction adenosine(37) in tRNA + dimethylallyl diphosphate = N(6)-dimethylallyladenosine(37) in tRNA + diphosphate. Catalyzes the transfer of a dimethylallyl group onto the adenine at position 37 in tRNAs that read codons beginning with uridine, leading to the formation of N6-(dimethylallyl)adenosine (i(6)A). This chain is tRNA dimethylallyltransferase, found in Chlamydia caviae (strain ATCC VR-813 / DSM 19441 / 03DC25 / GPIC) (Chlamydophila caviae).